Reading from the N-terminus, the 122-residue chain is Immunoglobulin lambda variable 8-61 (122 aa).

An N-terminal signal peptide occupies residues 1-24 (MSVPTMAWMMLLLGLLAYGSGVDS). The framework-1 stretch occupies residues 25-49 (QTVVTQEPSFSVSPGGTVTLTCGLS). The region spanning 25–122 (QTVVTQEPSF…YCVLYMGSGI (98 aa)) is the Ig-like domain. A disulfide bridge connects residues Cys-46 and Cys-114. The tract at residues 50-58 (SGSVSTSYY) is complementarity-determining-1. Positions 59–75 (PSWYQQTPGQAPRTLIY) are framework-2. Residues 76-78 (STN) are complementarity-determining-2. The tract at residues 79 to 114 (TRSSGVPDRFSGSILGNKAALTITGAQADDESDYYC) is framework-3. The tract at residues 115 to 122 (VLYMGSGI) is complementarity-determining-3.

In terms of assembly, immunoglobulins are composed of two identical heavy chains and two identical light chains; disulfide-linked.

It is found in the secreted. It localises to the cell membrane. V region of the variable domain of immunoglobulin light chains that participates in the antigen recognition. Immunoglobulins, also known as antibodies, are membrane-bound or secreted glycoproteins produced by B lymphocytes. In the recognition phase of humoral immunity, the membrane-bound immunoglobulins serve as receptors which, upon binding of a specific antigen, trigger the clonal expansion and differentiation of B lymphocytes into immunoglobulins-secreting plasma cells. Secreted immunoglobulins mediate the effector phase of humoral immunity, which results in the elimination of bound antigens. The antigen binding site is formed by the variable domain of one heavy chain, together with that of its associated light chain. Thus, each immunoglobulin has two antigen binding sites with remarkable affinity for a particular antigen. The variable domains are assembled by a process called V-(D)-J rearrangement and can then be subjected to somatic hypermutations which, after exposure to antigen and selection, allow affinity maturation for a particular antigen. The sequence is that of Immunoglobulin lambda variable 8-61 from Homo sapiens (Human).